We begin with the raw amino-acid sequence, 1944 residues long: Anaphase-promoting complex subunit 1 (1944 aa).

Phosphoserine occurs at positions 51 and 60. T291 is modified (phosphothreonine). The interval 312–343 is disordered; sequence ESPVASPFQNYSSIHSQSRSTSSPSLHSRSPS. 7 positions are modified to phosphoserine: S313, S341, S343, S355, S362, S373, and S377. Residues 323–343 are compositionally biased toward low complexity; the sequence is SSIHSQSRSTSSPSLHSRSPS. A disordered region spans residues 370 to 395; sequence NLSSHSQSPKRHSISHSPSGSFNDSF. Polar residues predominate over residues 384–393; that stretch reads SHSPSGSFND. The residue at position 537 (T537) is a Phosphothreonine. Residues S547 and S555 each carry the phosphoserine modification. Y571 bears the Phosphotyrosine mark. 3 positions are modified to phosphoserine: S680, S686, and S688. Residues 991-1014 form a disordered region; the sequence is NLPRGKSVLSSEVSSGTEAEEEDD. A compositionally biased stretch (polar residues) spans 998–1007; it reads VLSSEVSSGT. PC repeat units follow at residues 1297–1325, 1366–1404, 1467–1501, and 1520–1552; these read AAGLALGMVCLGHGSNLIGMSDLNVPEQL, GATLALAMIYLKTNNRSIADWLRAPDTMYLLDFVKPEFL, GACLSLGFRFAGSENLSAFSCLHKFAKDFMNYLSA, and LLSLAMVMAGSGNLKVLQLCRFLHMKTGGEMNY.

This sequence belongs to the APC1 family. As to quaternary structure, the mammalian APC/C is composed at least of 14 distinct subunits ANAPC1, ANAPC2, CDC27/APC3, ANAPC4, ANAPC5, CDC16/APC6, ANAPC7, CDC23/APC8, ANAPC10, ANAPC11, CDC26/APC12, ANAPC13, ANAPC15 and ANAPC16 that assemble into a complex of at least 19 chains with a combined molecular mass of around 1.2 MDa; APC/C interacts with FZR1 and FBXO5. In terms of processing, phosphorylated. Phosphorylation on Ser-355 occurs specifically during mitosis. Abundantly expressed in proliferating fibroblasts, juvenile testis, adult brain and epididymis.

It participates in protein modification; protein ubiquitination. Its function is as follows. Component of the anaphase promoting complex/cyclosome (APC/C), a cell cycle-regulated E3 ubiquitin ligase that controls progression through mitosis and the G1 phase of the cell cycle. The APC/C complex acts by mediating ubiquitination and subsequent degradation of target proteins: it mainly mediates the formation of 'Lys-11'-linked polyubiquitin chains and, to a lower extent, the formation of 'Lys-48'- and 'Lys-63'-linked polyubiquitin chains. The APC/C complex catalyzes assembly of branched 'Lys-11'-/'Lys-48'-linked branched ubiquitin chains on target proteins. The protein is Anaphase-promoting complex subunit 1 (Anapc1) of Mus musculus (Mouse).